Reading from the N-terminus, the 260-residue chain is ATP synthase subunit a (260 aa).

The next 7 helical transmembrane spans lie at phenylalanine 29 to isoleucine 49, phenylalanine 95 to isoleucine 115, histidine 124 to phenylalanine 144, phenylalanine 151 to leucine 171, methionine 191 to methionine 211, glutamate 213 to leucine 233, and valine 237 to isoleucine 257.

This sequence belongs to the ATPase A chain family. F-type ATPases have 2 components, CF(1) - the catalytic core - and CF(0) - the membrane proton channel. CF(1) has five subunits: alpha(3), beta(3), gamma(1), delta(1), epsilon(1). CF(0) has three main subunits: a, b and c.

Its subcellular location is the mitochondrion inner membrane. Its function is as follows. Mitochondrial membrane ATP synthase (F(1)F(0) ATP synthase or Complex V) produces ATP from ADP in the presence of a proton gradient across the membrane which is generated by electron transport complexes of the respiratory chain. F-type ATPases consist of two structural domains, F(1) - containing the extramembraneous catalytic core and F(0) - containing the membrane proton channel, linked together by a central stalk and a peripheral stalk. During catalysis, ATP synthesis in the catalytic domain of F(1) is coupled via a rotary mechanism of the central stalk subunits to proton translocation. Key component of the proton channel; it may play a direct role in the translocation of protons across the membrane. The protein is ATP synthase subunit a (ATP6) of Brassica napus (Rape).